A 165-amino-acid chain; its full sequence is Pro-MCH (165 aa).

An N-terminal signal peptide occupies residues 1-21 (MAKMSLSSYLLILTFSLFSQG). A disordered region spans residues 68-88 (NDDSSFMNDEENKNSKNTGSK). Ile143 carries the post-translational modification Isoleucine amide. A disulfide bridge connects residues Cys153 and Cys162.

This sequence belongs to the melanin-concentrating hormone family. Post-translationally, pro-MCH is processed differentially in the brain and in peripheral organs producing two neuropeptides; NEI and MCH. A third peptide, NGE, may also be produced. Preferential processing in neurons by prohormone convertase 2 (PC2) generates NEI. MCH is generated in neurons of the lateral hypothalmic area by several prohormone convertases including PC1/3, PC2 and PC5/6.

It is found in the secreted. In terms of biological role, MCH may act as a neurotransmitter or neuromodulator in a broad array of neuronal functions directed toward the regulation of goal-directed behavior, such as food intake, and general arousal. This Canis lupus familiaris (Dog) protein is Pro-MCH (PMCH).